Consider the following 146-residue polypeptide: 3-hydroxyacyl-[acyl-carrier-protein] dehydratase FabZ (146 aa).

Residue His-49 is part of the active site.

Belongs to the thioester dehydratase family. FabZ subfamily.

It is found in the cytoplasm. It carries out the reaction a (3R)-hydroxyacyl-[ACP] = a (2E)-enoyl-[ACP] + H2O. In terms of biological role, involved in unsaturated fatty acids biosynthesis. Catalyzes the dehydration of short chain beta-hydroxyacyl-ACPs and long chain saturated and unsaturated beta-hydroxyacyl-ACPs. The polypeptide is 3-hydroxyacyl-[acyl-carrier-protein] dehydratase FabZ (Wolbachia sp. subsp. Brugia malayi (strain TRS)).